A 428-amino-acid polypeptide reads, in one-letter code: Serine--tRNA ligase (428 aa).

231–233 (TAE) serves as a coordination point for L-serine. 262-264 (RSE) serves as a coordination point for ATP. Glu285 is a binding site for L-serine. Residue 349–352 (EISS) coordinates ATP. Position 385 (Ser385) interacts with L-serine.

The protein belongs to the class-II aminoacyl-tRNA synthetase family. Type-1 seryl-tRNA synthetase subfamily. In terms of assembly, homodimer. The tRNA molecule binds across the dimer.

It localises to the cytoplasm. It carries out the reaction tRNA(Ser) + L-serine + ATP = L-seryl-tRNA(Ser) + AMP + diphosphate + H(+). It catalyses the reaction tRNA(Sec) + L-serine + ATP = L-seryl-tRNA(Sec) + AMP + diphosphate + H(+). It participates in aminoacyl-tRNA biosynthesis; selenocysteinyl-tRNA(Sec) biosynthesis; L-seryl-tRNA(Sec) from L-serine and tRNA(Sec): step 1/1. Its function is as follows. Catalyzes the attachment of serine to tRNA(Ser). Is also able to aminoacylate tRNA(Sec) with serine, to form the misacylated tRNA L-seryl-tRNA(Sec), which will be further converted into selenocysteinyl-tRNA(Sec). The chain is Serine--tRNA ligase from Staphylococcus aureus (strain bovine RF122 / ET3-1).